The sequence spans 101 residues: Small ribosomal subunit protein bS6 (101 aa).

It belongs to the bacterial ribosomal protein bS6 family.

In terms of biological role, binds together with bS18 to 16S ribosomal RNA. The polypeptide is Small ribosomal subunit protein bS6 (Oleidesulfovibrio alaskensis (strain ATCC BAA-1058 / DSM 17464 / G20) (Desulfovibrio alaskensis)).